The following is a 205-amino-acid chain: Inosine triphosphate pyrophosphatase (205 aa).

20–25 lines the ITP pocket; sequence TGNAKK. Glu48 serves as a coordination point for Mg(2+). ITP contacts are provided by residues Lys60, 76 to 77, Lys93, 152 to 155, Lys175, and 180 to 181; these read DT, FGWD, and HR.

The protein belongs to the HAM1 NTPase family. Homodimer. The cofactor is Mg(2+). Mn(2+) serves as cofactor.

It is found in the cytoplasm. It catalyses the reaction ITP + H2O = IMP + diphosphate + H(+). It carries out the reaction dITP + H2O = dIMP + diphosphate + H(+). The catalysed reaction is XTP + H2O = XMP + diphosphate + H(+). Its function is as follows. Pyrophosphatase that hydrolyzes non-canonical purine nucleotides such as inosine triphosphate (ITP), deoxyinosine triphosphate (dITP) or xanthosine 5'-triphosphate (XTP) to their respective monophosphate derivatives. The enzyme does not distinguish between the deoxy- and ribose forms. Probably excludes non-canonical purines from RNA and DNA precursor pools, thus preventing their incorporation into RNA and DNA and avoiding chromosomal lesions. The chain is Inosine triphosphate pyrophosphatase from Oryza sativa subsp. japonica (Rice).